Consider the following 483-residue polypeptide: Betaine aldehyde dehydrogenase (483 aa).

K(+)-binding residues include Ile27 and Asp93. Position 149-151 (149-151 (GAW)) interacts with NAD(+). Residue Lys161 is the Charge relay system of the active site. Residue 175-178 (KPSE) coordinates NAD(+). Val179 provides a ligand contact to K(+). Residue 228 to 231 (SVPT) participates in NAD(+) binding. Val243 is a K(+) binding site. The active-site Proton acceptor is the Glu249. Positions 251, 283, and 380 each coordinate NAD(+). Cys283 acts as the Nucleophile in catalysis. Cys283 carries the post-translational modification Cysteine sulfenic acid (-SOH). The K(+) site is built by Lys450 and Gly453. Glu457 serves as the catalytic Charge relay system.

It belongs to the aldehyde dehydrogenase family. As to quaternary structure, dimer of dimers. It depends on K(+) as a cofactor.

It catalyses the reaction betaine aldehyde + NAD(+) + H2O = glycine betaine + NADH + 2 H(+). Its pathway is amine and polyamine biosynthesis; betaine biosynthesis via choline pathway; betaine from betaine aldehyde: step 1/1. Involved in the biosynthesis of the osmoprotectant glycine betaine. Catalyzes the irreversible oxidation of betaine aldehyde to the corresponding acid. The polypeptide is Betaine aldehyde dehydrogenase (Cereibacter sphaeroides (strain ATCC 17023 / DSM 158 / JCM 6121 / CCUG 31486 / LMG 2827 / NBRC 12203 / NCIMB 8253 / ATH 2.4.1.) (Rhodobacter sphaeroides)).